The primary structure comprises 143 residues: Large ribosomal subunit protein uL11 (143 aa).

The protein belongs to the universal ribosomal protein uL11 family. As to quaternary structure, part of the ribosomal stalk of the 50S ribosomal subunit. Interacts with L10 and the large rRNA to form the base of the stalk. L10 forms an elongated spine to which L12 dimers bind in a sequential fashion forming a multimeric L10(L12)X complex. One or more lysine residues are methylated.

Its function is as follows. Forms part of the ribosomal stalk which helps the ribosome interact with GTP-bound translation factors. The protein is Large ribosomal subunit protein uL11 of Janthinobacterium sp. (strain Marseille) (Minibacterium massiliensis).